The sequence spans 333 residues: B3 domain-containing transcription factor NGA4 (333 aa).

Residues 36–145 (FDKVLTPSDV…KIMFIDWRPR (110 aa)) constitute a DNA-binding region (TF-B3). A disordered region spans residues 268 to 333 (VEESSSSGDT…YKRKGKSLEL (66 aa)). Residues 323 to 333 (EYKRKGKSLEL) are compositionally biased toward basic and acidic residues.

It localises to the nucleus. In terms of biological role, regulates lateral organ growth. Functionally redundant with NGA1, NGA2 and NGA3. The chain is B3 domain-containing transcription factor NGA4 (NGA4) from Arabidopsis thaliana (Mouse-ear cress).